The primary structure comprises 124 residues: Large ribosomal subunit protein bL12 (124 aa).

Residues Met-102–Glu-116 are compositionally biased toward basic and acidic residues. The segment at Met-102 to Lys-124 is disordered.

Belongs to the bacterial ribosomal protein bL12 family. As to quaternary structure, homodimer. Part of the ribosomal stalk of the 50S ribosomal subunit. Forms a multimeric L10(L12)X complex, where L10 forms an elongated spine to which 2 to 4 L12 dimers bind in a sequential fashion. Binds GTP-bound translation factors.

Functionally, forms part of the ribosomal stalk which helps the ribosome interact with GTP-bound translation factors. Is thus essential for accurate translation. The sequence is that of Large ribosomal subunit protein bL12 from Chromohalobacter salexigens (strain ATCC BAA-138 / DSM 3043 / CIP 106854 / NCIMB 13768 / 1H11).